A 251-amino-acid polypeptide reads, in one-letter code: Large ribosomal subunit protein uL16m (251 aa).

A mitochondrion-targeting transit peptide spans 1-29 (MWRLLARASAPLLRVPLSDSWALLPASAG).

It belongs to the universal ribosomal protein uL16 family. Component of the mitochondrial large ribosomal subunit (mt-LSU). Mature mammalian 55S mitochondrial ribosomes consist of a small (28S) and a large (39S) subunit. The 28S small subunit contains a 12S ribosomal RNA (12S mt-rRNA) and 30 different proteins. The 39S large subunit contains a 16S rRNA (16S mt-rRNA), a copy of mitochondrial valine transfer RNA (mt-tRNA(Val)), which plays an integral structural role, and 52 different proteins.

The protein localises to the mitochondrion. This chain is Large ribosomal subunit protein uL16m (MRPL16), found in Homo sapiens (Human).